The primary structure comprises 1057 residues: Carbamoyl phosphate synthase large chain (1057 aa).

Residues methionine 1 to glutamate 401 form a carboxyphosphate synthetic domain region. Residues arginine 129, arginine 169, glycine 175, glycine 176, lysine 208, isoleucine 210, glutamate 215, glycine 241, isoleucine 242, histidine 243, glutamine 284, and glutamate 298 each contribute to the ATP site. In terms of domain architecture, ATP-grasp 1 spans arginine 133–valine 327. Mg(2+) contacts are provided by glutamine 284, glutamate 298, and asparagine 300. Mn(2+) is bound by residues glutamine 284, glutamate 298, and asparagine 300. An oligomerization domain region spans residues tyrosine 402 to serine 546. Positions isoleucine 547–glycine 929 are carbamoyl phosphate synthetic domain. The ATP-grasp 2 domain maps to glutamate 671–isoleucine 861. ATP contacts are provided by arginine 707, arginine 746, leucine 748, glutamate 752, glycine 777, valine 778, histidine 779, serine 780, glutamine 820, and glutamate 832. Mg(2+) contacts are provided by glutamine 820, glutamate 832, and asparagine 834. Mn(2+)-binding residues include glutamine 820, glutamate 832, and asparagine 834. Residues valine 930–methionine 1057 form the MGS-like domain. The tract at residues valine 930–methionine 1057 is allosteric domain.

The protein belongs to the CarB family. In terms of assembly, composed of two chains; the small (or glutamine) chain promotes the hydrolysis of glutamine to ammonia, which is used by the large (or ammonia) chain to synthesize carbamoyl phosphate. Tetramer of heterodimers (alpha,beta)4. Requires Mg(2+) as cofactor. The cofactor is Mn(2+).

It catalyses the reaction hydrogencarbonate + L-glutamine + 2 ATP + H2O = carbamoyl phosphate + L-glutamate + 2 ADP + phosphate + 2 H(+). The catalysed reaction is hydrogencarbonate + NH4(+) + 2 ATP = carbamoyl phosphate + 2 ADP + phosphate + 2 H(+). Its pathway is amino-acid biosynthesis; L-arginine biosynthesis; carbamoyl phosphate from bicarbonate: step 1/1. It functions in the pathway pyrimidine metabolism; UMP biosynthesis via de novo pathway; (S)-dihydroorotate from bicarbonate: step 1/3. Its function is as follows. Large subunit of the glutamine-dependent carbamoyl phosphate synthetase (CPSase). CPSase catalyzes the formation of carbamoyl phosphate from the ammonia moiety of glutamine, carbonate, and phosphate donated by ATP, constituting the first step of 2 biosynthetic pathways, one leading to arginine and/or urea and the other to pyrimidine nucleotides. The large subunit (synthetase) binds the substrates ammonia (free or transferred from glutamine from the small subunit), hydrogencarbonate and ATP and carries out an ATP-coupled ligase reaction, activating hydrogencarbonate by forming carboxy phosphate which reacts with ammonia to form carbamoyl phosphate. This Staphylococcus aureus (strain MW2) protein is Carbamoyl phosphate synthase large chain.